Consider the following 59-residue polypeptide: MAKLKITLVKSLIGRKKEHIATANALGLRKIRATVEHEGTPQIKGMLKKIDYLLKVEEI.

Belongs to the universal ribosomal protein uL30 family. Part of the 50S ribosomal subunit.

The chain is Large ribosomal subunit protein uL30 from Clostridium botulinum (strain Alaska E43 / Type E3).